A 374-amino-acid chain; its full sequence is Arf-GAP with dual PH domain-containing protein 1 (374 aa).

The region spanning 7–126 is the Arf-GAP domain; that stretch reads RAVLELLQRP…EFIYPEKQEP (120 aa). Residues 21 to 44 form a C4-type zinc finger; that stretch reads CADCGAPDPDWASYTLGVFICLSC. Serine 87 carries the post-translational modification Phosphoserine; by PKC. PH domains are found at residues 129–230 and 252–356; these read AGYR…AARF and NYLK…KAVD. N6-acetyllysine is present on lysine 272. At threonine 276 the chain carries Phosphothreonine; by PKC.

Interacts with PRKCA, PRKCI and PRKCZ. Interacts with the N-terminal region of PRKD1. In terms of processing, phosphorylated by PRKCA, PRKCI, PRKCZ and PRKD1 in vitro. In terms of tissue distribution, expressed at highest levels in brain and at lower levels in peripheral blood leukocytes.

The protein resides in the nucleus. It is found in the cytoplasm. In terms of biological role, GTPase-activating protein for the ADP ribosylation factor family. Binds phosphatidylinositol 3,4,5-trisphosphate (PtdInsP3) and inositol 1,3,4,5-tetrakisphosphate (InsP4). Regulates the incorporation of CD63 and CD9 into multivesicular bodies. The polypeptide is Arf-GAP with dual PH domain-containing protein 1 (ADAP1) (Homo sapiens (Human)).